We begin with the raw amino-acid sequence, 335 residues long: 2-acylglycerol O-acyltransferase 1 (335 aa).

2 helical membrane passes run Thr18–Ile38 and Val40–Phe60. Residues Asn121 and Asn125 are each glycosylated (N-linked (GlcNAc...) asparagine). Residues Leu132–Phe152 traverse the membrane as a helical segment. Residue Asn180 is glycosylated (N-linked (GlcNAc...) asparagine).

This sequence belongs to the diacylglycerol acyltransferase family. In terms of tissue distribution, expressed in stomach and liver.

The protein resides in the endoplasmic reticulum membrane. It catalyses the reaction a 2-acylglycerol + an acyl-CoA = a 1,2-diacylglycerol + CoA. The enzyme catalyses 2-(9Z-octadecenoyl)-glycerol + butanoyl-CoA = 1-butanoyl-2-(9Z-octadecenoyl)-glycerol + CoA. The catalysed reaction is 2-(9Z-octadecenoyl)-glycerol + octanoyl-CoA = 1-octanoyl-2-(9Z-octadecenoyl)-glycerol + CoA. It carries out the reaction 2-(9Z-octadecenoyl)-glycerol + dodecanoyl-CoA = 1-dodecanoyl-2-(9Z-octadecenoyl)-glycerol + CoA. It catalyses the reaction 2-(9Z-octadecenoyl)-glycerol + tetradecanoyl-CoA = 1-tetradecanoyl-2-(9Z-octadecenoyl)-glycerol + CoA. The enzyme catalyses 2-(9Z-octadecenoyl)-glycerol + hexadecanoyl-CoA = 1-hexadecanoyl-2-(9Z-octadecenoyl)-glycerol + CoA. The catalysed reaction is 2-(9Z-octadecenoyl)-glycerol + octadecanoyl-CoA = 1-octadecanoyl-2-(9Z-octadecenoyl)-glycerol + CoA. It carries out the reaction eicosanoyl-CoA + 2-(9Z-octadecenoyl)-glycerol = 1-eicosanoyl-2-(9Z-octadecenoyl)-glycerol + CoA. It catalyses the reaction 2-(9Z-octadecenoyl)-glycerol + (9Z)-octadecenoyl-CoA = 1,2-di-(9Z-octadecenoyl)-glycerol + CoA. The enzyme catalyses 2-(9Z-octadecenoyl)-glycerol + (9Z,12Z)-octadecadienoyl-CoA = 1-(9Z,12Z-octadecadienoyl)-2-(9Z-octadecenoyl)-glycerol + CoA. The catalysed reaction is 2-(9Z-octadecenoyl)-glycerol + (5Z,8Z,11Z,14Z)-eicosatetraenoyl-CoA = 1-(5Z,8Z,11Z,14Z-eicosatetraenoyl)-2-(9Z-octadecenoyl)-glycerol + CoA. It carries out the reaction a 2-acylglycerol + an acyl-CoA = a 1,2-diacyl-sn-glycerol + CoA. It catalyses the reaction a 2-acylglycerol + an acyl-CoA = a 2,3-diacyl-sn-glycerol + CoA. The enzyme catalyses a 1-acylglycerol + an acyl-CoA = a 1,2-diacylglycerol + CoA. The catalysed reaction is 1-dodecanoylglycerol + (9Z)-octadecenoyl-CoA = 1-dodecanoyl-2-(9Z-octadecenoyl)-glycerol + CoA. It carries out the reaction 1-tetradecanoylglycerol + (9Z)-octadecenoyl-CoA = 1-tetradecanoyl-2-(9Z-octadecenoyl)-glycerol + CoA. It catalyses the reaction 1-hexadecanoylglycerol + (9Z)-octadecenoyl-CoA = 1-hexadecanoyl-2-(9Z-octadecenoyl)-glycerol + CoA. The enzyme catalyses 1-(9Z-octadecenoyl)-glycerol + (9Z)-octadecenoyl-CoA = 1,2-di-(9Z-octadecenoyl)-glycerol + CoA. The catalysed reaction is 1-(9Z,12Z-octadecadienoyl)-glycerol + (9Z)-octadecenoyl-CoA = 1-(9Z,12Z-octadecadienoyl)-2-(9Z-octadecenoyl)-glycerol + CoA. It carries out the reaction 1-(9Z,12Z,15Z-octadecatrienoyl)-glycerol + (9Z)-octadecenoyl-CoA = 1-(9Z,12Z,15Z-octadecatrienoyl)-2-(9Z-octadecenoyl)-glycerol + CoA. It catalyses the reaction 1-(5Z,8Z,11Z,14Z-eicosatetraenoyl)-glycerol + (9Z)-octadecenoyl-CoA = 1-(5Z,8Z,11Z,14Z-eicosatetraenoyl)-2-(9Z-octadecenoyl)-glycerol + CoA. The enzyme catalyses a 1-acylglycerol + an acyl-CoA = a 1,3-diacylglycerol + CoA. The catalysed reaction is 1-dodecanoylglycerol + (9Z)-octadecenoyl-CoA = 1-dodecanoyl-3-(9Z-octadecenoyl)-glycerol + CoA. It carries out the reaction 1-hexadecanoylglycerol + (9Z)-octadecenoyl-CoA = 1-(9Z-octadecenoyl)-3-hexadecanoylglycerol + CoA. It catalyses the reaction 1-octadecanoylglycerol + (9Z)-octadecenoyl-CoA = 1-octadecanoyl-3-(9Z-octadecenoyl)-glycerol + CoA. The enzyme catalyses 1-(9Z-octadecenoyl)-sn-glycerol + (9Z)-octadecenoyl-CoA = 1,3-di-(9Z-octadecenoyl)-glycerol + CoA. The catalysed reaction is 1-(9Z,12Z-octadecadienoyl)-glycerol + (9Z)-octadecenoyl-CoA = 1-(9Z-octadecenoyl)-3-(9Z,12Z-octadecadienoyl)-glycerol + CoA. It carries out the reaction 1-(9Z,12Z,15Z-octadecatrienoyl)-glycerol + (9Z)-octadecenoyl-CoA = 1-(9Z,12Z,15Z-octadecatrienoyl)-3-(9Z-octadecenoyl)-glycerol + CoA. It catalyses the reaction a 1-acyl-sn-glycerol + an acyl-CoA = a 1,3-diacyl-sn-glycerol + CoA. The enzyme catalyses a 3-acyl-sn-glycerol + an acyl-CoA = a 1,3-diacyl-sn-glycerol + CoA. The catalysed reaction is 3-octadecanoyl-sn-glycerol + (9Z)-octadecenoyl-CoA = 1-(9Z-octadecenoyl)-3-octadecanoyl-sn-glycerol + CoA. Its pathway is glycerolipid metabolism; triacylglycerol biosynthesis. Its function is as follows. Involved in glycerolipid synthesis and lipid metabolism. Catalyzes the formation of diacylglycerol, the precursor of triacylglycerol, by transferring the acyl chain of a fatty acyl-CoA to a monoacylglycerol, mainly at the sn-1 or sn-3 positions. It uses both sn-2-monoacylglycerol (2-acylglycerol) and sn-1-monoacylglycerol (1-acyl-sn-glycerol) equally well as substrates, and uses sn-3-monoacylglycerol (3-acyl-sn-glycerol) with lower efficiency. Probably not involved in absorption of dietary fat in the small intestine. The sequence is that of 2-acylglycerol O-acyltransferase 1 from Homo sapiens (Human).